The sequence spans 144 residues: MHPTLKSNAGEWSQPIVNLFYSNFSGNCKALLQYIDNAGITDHIPIKFINVDNPTMRSVVSAKISHVPALVVLQDDQMSLYVAESVWEWFDNYRTPPPLADGATVDSQASENGEKEAQPTPPKEGLLTVLELAKQMRKEREQQT.

Positions 98-127 (PLADGATVDSQASENGEKEAQPTPPKEGLL) are disordered.

This is an uncharacterized protein from Aedes vexans (Inland floodwater mosquito).